The sequence spans 311 residues: Methionyl-tRNA formyltransferase (311 aa).

110–113 lines the (6S)-5,6,7,8-tetrahydrofolate pocket; it reads SLLP.

It belongs to the Fmt family.

It carries out the reaction L-methionyl-tRNA(fMet) + (6R)-10-formyltetrahydrofolate = N-formyl-L-methionyl-tRNA(fMet) + (6S)-5,6,7,8-tetrahydrofolate + H(+). Its function is as follows. Attaches a formyl group to the free amino group of methionyl-tRNA(fMet). The formyl group appears to play a dual role in the initiator identity of N-formylmethionyl-tRNA by promoting its recognition by IF2 and preventing the misappropriation of this tRNA by the elongation apparatus. This is Methionyl-tRNA formyltransferase from Streptococcus pyogenes serotype M6 (strain ATCC BAA-946 / MGAS10394).